We begin with the raw amino-acid sequence, 353 residues long: uncharacterized protein (353 aa).

This is an uncharacterized protein from Archaeoglobus fulgidus (strain ATCC 49558 / DSM 4304 / JCM 9628 / NBRC 100126 / VC-16).